We begin with the raw amino-acid sequence, 891 residues long: Alanine--tRNA ligase (891 aa).

Positions 576, 580, 684, and 688 each coordinate Zn(2+).

This sequence belongs to the class-II aminoacyl-tRNA synthetase family. Zn(2+) serves as cofactor.

Its subcellular location is the cytoplasm. It carries out the reaction tRNA(Ala) + L-alanine + ATP = L-alanyl-tRNA(Ala) + AMP + diphosphate. Functionally, catalyzes the attachment of alanine to tRNA(Ala) in a two-step reaction: alanine is first activated by ATP to form Ala-AMP and then transferred to the acceptor end of tRNA(Ala). Also edits incorrectly charged Ser-tRNA(Ala) and Gly-tRNA(Ala) via its editing domain. This is Alanine--tRNA ligase from Orientia tsutsugamushi (strain Boryong) (Rickettsia tsutsugamushi).